Reading from the N-terminus, the 137-residue chain is Altered inheritance of mitochondria protein 11 (137 aa).

The next 2 helical transmembrane spans lie at 20 to 37 and 66 to 88; these read YGAA…SRAI and LTYA…CWAL.

It belongs to the AIM11 family.

The protein localises to the membrane. The protein is Altered inheritance of mitochondria protein 11 (AIM11) of Saccharomyces cerevisiae (strain RM11-1a) (Baker's yeast).